Consider the following 440-residue polypeptide: tRNA(Ile)-lysidine synthase (440 aa).

Position 31–36 (31–36 (SGGADS)) interacts with ATP.

This sequence belongs to the tRNA(Ile)-lysidine synthase family.

It localises to the cytoplasm. It catalyses the reaction cytidine(34) in tRNA(Ile2) + L-lysine + ATP = lysidine(34) in tRNA(Ile2) + AMP + diphosphate + H(+). Ligates lysine onto the cytidine present at position 34 of the AUA codon-specific tRNA(Ile) that contains the anticodon CAU, in an ATP-dependent manner. Cytidine is converted to lysidine, thus changing the amino acid specificity of the tRNA from methionine to isoleucine. This is tRNA(Ile)-lysidine synthase from Borreliella afzelii (strain PKo) (Borrelia afzelii).